The following is a 240-amino-acid chain: MNTLFIADLHLSAQEPAITAGFLRFLRQDAIHADALYILGDLFEAWIGDDDPEPLHGEIAAALKALQQAGVPCYFIHGNRDFLVGKRFARTSGMQLLPEEQVLDLYGRKILILHGDTLCTDDQAYQQFRRKVHNPLIQKLFLAMPLRWRLKIAAKMRARSQQSNQYKSDSIMDVNPQAVEQAMLRHKVHWMIHGHTHRPAVHELALSNGKAHRVVLGAWHVEGSMIKVSADAVELIQFPF.

Mn(2+) is bound by residues aspartate 8, histidine 10, aspartate 41, asparagine 79, and histidine 114. Asparagine 79 to arginine 80 lines the substrate pocket. Substrate contacts are provided by aspartate 122, serine 160, asparagine 164, lysine 167, and histidine 195. Mn(2+) is bound by residues histidine 195 and histidine 197.

It belongs to the LpxH family. The cofactor is Mn(2+).

It is found in the cell inner membrane. It catalyses the reaction UDP-2-N,3-O-bis[(3R)-3-hydroxytetradecanoyl]-alpha-D-glucosamine + H2O = 2-N,3-O-bis[(3R)-3-hydroxytetradecanoyl]-alpha-D-glucosaminyl 1-phosphate + UMP + 2 H(+). Its pathway is glycolipid biosynthesis; lipid IV(A) biosynthesis; lipid IV(A) from (3R)-3-hydroxytetradecanoyl-[acyl-carrier-protein] and UDP-N-acetyl-alpha-D-glucosamine: step 4/6. Functionally, hydrolyzes the pyrophosphate bond of UDP-2,3-diacylglucosamine to yield 2,3-diacylglucosamine 1-phosphate (lipid X) and UMP by catalyzing the attack of water at the alpha-P atom. Involved in the biosynthesis of lipid A, a phosphorylated glycolipid that anchors the lipopolysaccharide to the outer membrane of the cell. This chain is UDP-2,3-diacylglucosamine hydrolase, found in Serratia proteamaculans (strain 568).